The primary structure comprises 124 residues: Large ribosomal subunit protein uL29 (124 aa).

The protein belongs to the universal ribosomal protein uL29 family.

In Tetrahymena thermophila (strain SB210), this protein is Large ribosomal subunit protein uL29 (RPL35).